The primary structure comprises 305 residues: Catechol 1,2-dioxygenase (305 aa).

Fe cation-binding residues include Tyr163, Tyr197, His221, and His223.

This sequence belongs to the intradiol ring-cleavage dioxygenase family. Homodimer. Fe(3+) is required as a cofactor.

It catalyses the reaction catechol + O2 = cis,cis-muconate + 2 H(+). It participates in aromatic compound metabolism; beta-ketoadipate pathway; 5-oxo-4,5-dihydro-2-furylacetate from catechol: step 1/3. This is Catechol 1,2-dioxygenase (catA) from Acinetobacter guillouiae (Acinetobacter genomosp. 11).